The chain runs to 99 residues: Cell division protein FtsB (99 aa).

Residues 1–3 are Cytoplasmic-facing; the sequence is MKF. A helical transmembrane segment spans residues 4 to 21; sequence FVITLIVLLGLLQYRLWS. Residues 22–99 lie on the Periplasmic side of the membrane; it reads GDNSLPEYFV…GDRAVSSPSQ (78 aa). Residues 31-73 adopt a coiled-coil conformation; sequence VLQKQIAAQQDGNAKLNERNQVLKEEIIDLKSGTEAIEERARN.

This sequence belongs to the FtsB family. In terms of assembly, part of a complex composed of FtsB, FtsL and FtsQ.

Its subcellular location is the cell inner membrane. Essential cell division protein. May link together the upstream cell division proteins, which are predominantly cytoplasmic, with the downstream cell division proteins, which are predominantly periplasmic. The polypeptide is Cell division protein FtsB (Shewanella oneidensis (strain ATCC 700550 / JCM 31522 / CIP 106686 / LMG 19005 / NCIMB 14063 / MR-1)).